A 219-amino-acid chain; its full sequence is Ran-binding protein 1 homolog c (219 aa).

A compositionally biased stretch (basic and acidic residues) spans 1 to 11 (MASTEPERENR). Disordered stretches follow at residues 1–30 (MAST…VAPI) and 160–219 (QVGK…EAST). Positions 12 to 23 (EDETEVNEDEDT) are enriched in acidic residues. Residues 26-161 (QVAPIVRLEE…FTEIAESQQV (136 aa)) form the RanBD1 domain. Over residues 185-219 (SEEKAKEAEEKEPAKEDKETKKEKVEEEKKTEAST) the composition is skewed to basic and acidic residues.

It is found in the nucleus. The protein resides in the nuclear pore complex. This is Ran-binding protein 1 homolog c (RANBP1C) from Arabidopsis thaliana (Mouse-ear cress).